Reading from the N-terminus, the 198-residue chain is Protein GrpE (198 aa).

The disordered stretch occupies residues 1 to 58 (MTEKDQSVNNEEFAEKEDNTAKDSNTDEQIEKTASEDDVQNDSSAVDDKEKEIQQLKE). 2 stretches are compositionally biased toward basic and acidic residues: residues 16 to 35 (KEDNTAKDSNTDEQIEKTAS) and 46 to 58 (VDDKEKEIQQLKE).

Belongs to the GrpE family. In terms of assembly, homodimer.

It is found in the cytoplasm. Participates actively in the response to hyperosmotic and heat shock by preventing the aggregation of stress-denatured proteins, in association with DnaK and GrpE. It is the nucleotide exchange factor for DnaK and may function as a thermosensor. Unfolded proteins bind initially to DnaJ; upon interaction with the DnaJ-bound protein, DnaK hydrolyzes its bound ATP, resulting in the formation of a stable complex. GrpE releases ADP from DnaK; ATP binding to DnaK triggers the release of the substrate protein, thus completing the reaction cycle. Several rounds of ATP-dependent interactions between DnaJ, DnaK and GrpE are required for fully efficient folding. This chain is Protein GrpE, found in Staphylococcus carnosus (strain TM300).